The following is a 166-amino-acid chain: Large ribosomal subunit protein uL10 (166 aa).

It belongs to the universal ribosomal protein uL10 family. As to quaternary structure, part of the ribosomal stalk of the 50S ribosomal subunit. The N-terminus interacts with L11 and the large rRNA to form the base of the stalk. The C-terminus forms an elongated spine to which L12 dimers bind in a sequential fashion forming a multimeric L10(L12)X complex.

Forms part of the ribosomal stalk, playing a central role in the interaction of the ribosome with GTP-bound translation factors. The chain is Large ribosomal subunit protein uL10 from Flavobacterium psychrophilum (strain ATCC 49511 / DSM 21280 / CIP 103535 / JIP02/86).